A 179-amino-acid polypeptide reads, in one-letter code: tRNA (cytidine(56)-2'-O)-methyltransferase (179 aa).

S-adenosyl-L-methionine contacts are provided by residues Leu82, 112-116 (GAEKV), and 130-137 (VGNQPHSE).

Belongs to the aTrm56 family. Homodimer.

It localises to the cytoplasm. The enzyme catalyses cytidine(56) in tRNA + S-adenosyl-L-methionine = 2'-O-methylcytidine(56) in tRNA + S-adenosyl-L-homocysteine + H(+). Functionally, specifically catalyzes the AdoMet-dependent 2'-O-ribose methylation of cytidine at position 56 in tRNAs. The sequence is that of tRNA (cytidine(56)-2'-O)-methyltransferase from Methanococcus maripaludis (strain C6 / ATCC BAA-1332).